A 599-amino-acid polypeptide reads, in one-letter code: Aspartate--tRNA(Asp/Asn) ligase (599 aa).

Residue E180 participates in L-aspartate binding. Residues 204–207 (QLLK) are aspartate. L-aspartate is bound at residue R226. Residues 226–228 (RDE) and Q235 each bind ATP. L-aspartate is bound at residue H457. E491 contributes to the ATP binding site. An L-aspartate-binding site is contributed by R498. 543–546 (GWDR) is a binding site for ATP. Residues 565 to 599 (KAGGGRDPLTGAPAPISDEQRAETGVDYDPDADEN) are disordered. Residues 590-599 (VDYDPDADEN) show a composition bias toward acidic residues.

The protein belongs to the class-II aminoacyl-tRNA synthetase family. Type 1 subfamily. In terms of assembly, homodimer.

The protein localises to the cytoplasm. It catalyses the reaction tRNA(Asx) + L-aspartate + ATP = L-aspartyl-tRNA(Asx) + AMP + diphosphate. Its function is as follows. Aspartyl-tRNA synthetase with relaxed tRNA specificity since it is able to aspartylate not only its cognate tRNA(Asp) but also tRNA(Asn). Reaction proceeds in two steps: L-aspartate is first activated by ATP to form Asp-AMP and then transferred to the acceptor end of tRNA(Asp/Asn). The protein is Aspartate--tRNA(Asp/Asn) ligase of Bifidobacterium longum (strain NCC 2705).